A 275-amino-acid polypeptide reads, in one-letter code: tRNA (guanine-N(7)-)-methyltransferase (275 aa).

The disordered stretch occupies residues 1-73 (MRHHGRMHAR…GGQQDTWERL (73 aa)). A compositionally biased stretch (basic residues) spans 46-59 (AHRHRRVTSFRSRR). Glutamate 107, glutamate 132, aspartate 159, and aspartate 182 together coordinate S-adenosyl-L-methionine. Aspartate 182 is a catalytic residue. Substrate-binding positions include lysine 186, aspartate 218, and 254-257 (TKYE).

This sequence belongs to the class I-like SAM-binding methyltransferase superfamily. TrmB family.

The catalysed reaction is guanosine(46) in tRNA + S-adenosyl-L-methionine = N(7)-methylguanosine(46) in tRNA + S-adenosyl-L-homocysteine. The protein operates within tRNA modification; N(7)-methylguanine-tRNA biosynthesis. Its function is as follows. Catalyzes the formation of N(7)-methylguanine at position 46 (m7G46) in tRNA. The chain is tRNA (guanine-N(7)-)-methyltransferase from Mycobacterium sp. (strain KMS).